The sequence spans 22 residues: 2.4 kDa venom peptide (22 aa).

Post-translationally, contains 2 disulfide bonds. As to expression, expressed by the venom gland.

It localises to the secreted. Not lethal to mice by intraperitoneal or intracerebroventricular injections in doses up to 150 micrograms. The chain is 2.4 kDa venom peptide from Heterometrus spinifer (Asia giant forest scorpion).